A 360-amino-acid chain; its full sequence is Peptide chain release factor 1 (360 aa).

Gln237 bears the N5-methylglutamine mark.

The protein belongs to the prokaryotic/mitochondrial release factor family. Methylated by PrmC. Methylation increases the termination efficiency of RF1.

It localises to the cytoplasm. Functionally, peptide chain release factor 1 directs the termination of translation in response to the peptide chain termination codons UAG and UAA. The protein is Peptide chain release factor 1 of Pseudomonas fluorescens (strain ATCC BAA-477 / NRRL B-23932 / Pf-5).